The primary structure comprises 358 residues: tRNA-specific 2-thiouridylase MnmA (358 aa).

Residues 8–15 and methionine 35 each bind ATP; that span reads AMSGGVDS. The tract at residues 95–97 is interaction with target base in tRNA; sequence NPD. Cysteine 100 (nucleophile) is an active-site residue. A disulfide bond links cysteine 100 and cysteine 194. Glycine 124 is an ATP binding site. The tract at residues 144-146 is interaction with tRNA; that stretch reads KDQ. Cysteine 194 functions as the Cysteine persulfide intermediate in the catalytic mechanism. The interval 301–302 is interaction with tRNA; sequence RY.

It belongs to the MnmA/TRMU family.

The protein resides in the cytoplasm. The catalysed reaction is S-sulfanyl-L-cysteinyl-[protein] + uridine(34) in tRNA + AH2 + ATP = 2-thiouridine(34) in tRNA + L-cysteinyl-[protein] + A + AMP + diphosphate + H(+). Catalyzes the 2-thiolation of uridine at the wobble position (U34) of tRNA, leading to the formation of s(2)U34. The polypeptide is tRNA-specific 2-thiouridylase MnmA (Chlamydia trachomatis serovar L2 (strain ATCC VR-902B / DSM 19102 / 434/Bu)).